The chain runs to 267 residues: Indole-3-glycerol phosphate synthase (267 aa).

This sequence belongs to the TrpC family.

The enzyme catalyses 1-(2-carboxyphenylamino)-1-deoxy-D-ribulose 5-phosphate + H(+) = (1S,2R)-1-C-(indol-3-yl)glycerol 3-phosphate + CO2 + H2O. It participates in amino-acid biosynthesis; L-tryptophan biosynthesis; L-tryptophan from chorismate: step 4/5. The polypeptide is Indole-3-glycerol phosphate synthase (Delftia acidovorans (strain DSM 14801 / SPH-1)).